The chain runs to 414 residues: Putative competence-damage inducible protein (414 aa).

Belongs to the CinA family.

The chain is Putative competence-damage inducible protein from Clostridium novyi (strain NT).